Consider the following 323-residue polypeptide: L-lactate dehydrogenase 1 (323 aa).

NAD(+) is bound by residues valine 17, aspartate 38, arginine 43, tyrosine 68, and 82–83 (GA). Positions 85 and 91 each coordinate substrate. Residues serine 104, 121–123 (AAN), and serine 146 contribute to the NAD(+) site. 123–126 (NPVD) is a binding site for substrate. 151 to 154 (DTGR) is a binding site for substrate. Histidine 178 serves as the catalytic Proton acceptor. Tyrosine 223 is subject to Phosphotyrosine. A substrate-binding site is contributed by threonine 232.

This sequence belongs to the LDH/MDH superfamily. LDH family. In terms of assembly, homotetramer.

Its subcellular location is the cytoplasm. The enzyme catalyses (S)-lactate + NAD(+) = pyruvate + NADH + H(+). It functions in the pathway fermentation; pyruvate fermentation to lactate; (S)-lactate from pyruvate: step 1/1. Catalyzes the conversion of lactate to pyruvate. This chain is L-lactate dehydrogenase 1, found in Lactobacillus johnsonii (strain CNCM I-12250 / La1 / NCC 533).